We begin with the raw amino-acid sequence, 295 residues long: Ribosomal protein L11 methyltransferase (295 aa).

Thr-150, Gly-171, Asp-193, and Asn-232 together coordinate S-adenosyl-L-methionine.

This sequence belongs to the methyltransferase superfamily. PrmA family.

It localises to the cytoplasm. The enzyme catalyses L-lysyl-[protein] + 3 S-adenosyl-L-methionine = N(6),N(6),N(6)-trimethyl-L-lysyl-[protein] + 3 S-adenosyl-L-homocysteine + 3 H(+). Functionally, methylates ribosomal protein L11. This chain is Ribosomal protein L11 methyltransferase, found in Neisseria gonorrhoeae (strain ATCC 700825 / FA 1090).